Reading from the N-terminus, the 133-residue chain is DNA-directed RNA polymerases I and III subunit RPAC2 (133 aa).

Met-1 is modified (N-acetylmethionine).

Belongs to the archaeal Rpo11/eukaryotic RPB11/RPC19 RNA polymerase subunit family. In terms of assembly, component of the RNA polymerase I and RNA polymerase III complexes consisting of at least 13 and 17 subunits, respectively. Pol I complex consists of a ten-subunit catalytic core composed of POLR1A/RPA1, POLR1B/RPA2, POLR1C/RPAC1, POLR1D/RPAC2, POLR1H/RPA12, POLR2E/RPABC1, POLR2F/RPABC2, POLR2H/RPABC3, POLR2K/RPABC4 and POLR2L/RPABC5; a mobile stalk subunit POLR1F/RPA43 protruding from the core and additional subunits homologous to general transcription factors POLR1E/RPA49 and POLR1G/RPA34. Part of Pol I pre-initiation complex (PIC), in which Pol I core assembles with RRN3 and promoter-bound UTBF and SL1/TIF-IB complex. Pol III complex consists of a ten-subunit catalytic core composed of POLR3A/RPC1, POLR3B/RPC2, POLR1C/RPAC1, POLR1D/RPAC2, POLR3K/RPC10, POLR2E/RPABC1, POLR2F/RPABC2, POLR2H/RPABC3, POLR2K/RPABC4 and POLR2L/RPABC5; a mobile stalk composed of two subunits POLR3H/RPC8 and CRCP/RPC9, protruding from the core and functioning primarily in transcription initiation; and additional subunits homologous to general transcription factors of the RNA polymerase II machinery, POLR3C/RPC3-POLR3F/RPC6-POLR3G/RPC7 heterotrimer required for transcription initiation and POLR3D/RPC4-POLR3E/RPC5 heterodimer involved in both transcription initiation and termination.

The protein localises to the nucleus. The protein resides in the nucleolus. Its function is as follows. DNA-dependent RNA polymerase catalyzes the transcription of DNA into RNA using the four ribonucleoside triphosphates as substrates. Common component of RNA polymerases I and III which synthesize ribosomal RNA precursors and short non-coding RNAs including 5S rRNA, snRNAs, tRNAs and miRNAs, respectively. This Homo sapiens (Human) protein is DNA-directed RNA polymerases I and III subunit RPAC2.